Reading from the N-terminus, the 576-residue chain is MEVPIAAMTFAHPANVMTLASRQPKSKRSHISPATTAHRNLQTRLAHHHHATPASLPMAICNTVDKVINRFIDLPEQRPTVDPRRVLSGNFAPVDELPPTSCHVIRGSIPSCLAGGVYIRNGPNPQHRLPQRTHHLFDGDGMLHSLLIPSASSTLLSEPVLCSRYVHTYKYLLERETGGPVLPNFFAGFHGVAGLARAVVMIARVLAGQINLNKGFGLANTSITLFADCLYALCESDLPYSMHINPANGEVTTLGRCDFGGDLSFRMTAHPKKDPVTMELFAFRYNVFQPFITYFWFDRAGSKVADVPILSLQKPSVMHDFAITERYAIFPESQLIVNPMDMVMRGSSLVGLDRTMVPRIGVLPRYAKDESDMRWFEVPRFNMLHTTNGWEEADGEEIVLVAPNILSIEHMLGNMELMRARVDMVRINLCTGDVSCTALSPESLEFGVIHQGYVGRKNRYGYFGVSGPLPKIKGIRKLDFDLVGSGDCTVGRRDFGLGCFAGEPFFVPDNIDGYGNEDSGYVVCYTHEEDTGESWFVVMDAKSPELDIVAEVQLPSRIPYGFHGIFVKQAELLAQQ.

A chloroplast-targeting transit peptide spans 1 to 34 (MEVPIAAMTFAHPANVMTLASRQPKSKRSHISPA). Positions 270, 319, 385, and 563 each coordinate Fe cation.

Belongs to the carotenoid oxygenase family. Fe(2+) is required as a cofactor.

It is found in the plastid. The protein localises to the chloroplast. The catalysed reaction is a 9-cis-epoxycarotenoid + O2 = a 12'-apo-carotenal + 2-cis,4-trans-xanthoxin. It catalyses the reaction 9-cis-violaxanthin + O2 = (3S,5R,6S)-5,6-epoxy-3-hydroxy-5,6-dihydro-12'-apo-beta-caroten-12'-al + 2-cis,4-trans-xanthoxin. It carries out the reaction 9'-cis-neoxanthin + O2 = (3S,5R,6R)-3,5-dihydroxy-6,7-didehydro-5,6-dihydro-12'-apo-beta-caroten-12'-al + 2-cis,4-trans-xanthoxin. Its function is as follows. Has a 11,12(11',12') 9-cis epoxycarotenoid cleavage activity. Catalyzes the first step of abscisic-acid biosynthesis from carotenoids. This Oryza sativa subsp. japonica (Rice) protein is 9-cis-epoxycarotenoid dioxygenase NCED2, chloroplastic.